The chain runs to 119 residues: Large ribosomal subunit protein bL20 (119 aa).

The protein belongs to the bacterial ribosomal protein bL20 family.

Its function is as follows. Binds directly to 23S ribosomal RNA and is necessary for the in vitro assembly process of the 50S ribosomal subunit. It is not involved in the protein synthesizing functions of that subunit. The protein is Large ribosomal subunit protein bL20 of Geobacillus kaustophilus (strain HTA426).